We begin with the raw amino-acid sequence, 115 residues long: Transmembrane protein 14C (115 aa).

4 helical membrane-spanning segments follow: residues 8-28 (LVPL…GGII), 33-53 (AGSV…GLGA), 63-83 (VWVF…RFYN), and 88-108 (MPAG…VAKI).

This sequence belongs to the TMEM14 family.

Its subcellular location is the mitochondrion membrane. Functionally, required for normal heme biosynthesis. The chain is Transmembrane protein 14C (Tmem14c) from Rattus norvegicus (Rat).